Reading from the N-terminus, the 338-residue chain is Glycerol-3-phosphate dehydrogenase [NAD(P)+] (338 aa).

NADPH is bound by residues serine 13, tryptophan 14, and lysine 108. Positions 108, 139, and 141 each coordinate sn-glycerol 3-phosphate. NADPH is bound at residue alanine 143. Sn-glycerol 3-phosphate is bound by residues lysine 194, aspartate 247, serine 257, arginine 258, and asparagine 259. Lysine 194 functions as the Proton acceptor in the catalytic mechanism. Arginine 258 contributes to the NADPH binding site. The NADPH site is built by valine 282 and glutamate 284.

It belongs to the NAD-dependent glycerol-3-phosphate dehydrogenase family.

The protein resides in the cytoplasm. It carries out the reaction sn-glycerol 3-phosphate + NAD(+) = dihydroxyacetone phosphate + NADH + H(+). It catalyses the reaction sn-glycerol 3-phosphate + NADP(+) = dihydroxyacetone phosphate + NADPH + H(+). Its pathway is membrane lipid metabolism; glycerophospholipid metabolism. Catalyzes the reduction of the glycolytic intermediate dihydroxyacetone phosphate (DHAP) to sn-glycerol 3-phosphate (G3P), the key precursor for phospholipid synthesis. The chain is Glycerol-3-phosphate dehydrogenase [NAD(P)+] from Listeria monocytogenes serotype 4b (strain CLIP80459).